Here is a 512-residue protein sequence, read N- to C-terminus: Cytochrome P450 monooxygenase FrzL (512 aa).

The chain crosses the membrane as a helical span at residues 6-26; that stretch reads TMLAFVPYLAVFVACYGLVYY. C423 provides a ligand contact to heme.

The protein belongs to the cytochrome P450 family. The cofactor is heme.

Its subcellular location is the membrane. Cytochrome P450 monooxygenase; part of the gene cluster that mediates the biosynthesis of the alkaloid (-)-FR901483, a potent immunosuppressant that shows efficacy in animal models and a probable inhibitor of purine nucleotide biosynthesis by targeting phosphoribosylpyrophosphate amidotransferase (PPAT). The only unassigned enzyme in the cluster is the second cytochrome P450 monooxygenase FrzL. The biosynthesis of (-)-FR901483 starts with the condensation of two L-tyrosines to yield (S,S)-dityrosyl-piperazine. This process occurs in 3 steps with the non-canonical nonribosomal peptide synthetase FrzA catalyzing the reduction of L-tyrosine into L-tyrosinal, the spontaneous condensation of 2 L-tyrosinal units, and the subsequent reduction by the NmrA-like family domain-containing oxidoreductase FrzB. The cytochrome P450 monooxygenase FrzC then performs coupling between N10 and C1' to morph the piperazine into a 1,4-diazabicyclo[3.2.1]octane spiro-fused to a 2,5-cyclohexadienone. The dienone portion is further reduced to cyclohexanone by the flavin-dependent reductase FrzD. The methyltranserases (MTs) FrzE and FrzF are then involved in the methylation at the C10' amine and the C4 phenolic oxygen, respectively. The order of the two MTs appear to be interchangeable. Cleavage of the C9-N10' bond by the dioxygenase FrzG then leads to formation of a conjugated iminium. In addition to the oxidation of C9, an additional dehydrogenation between C7 and C8 can occur to give a likely shunt product. The next biosynthetic step is the intramolecular aldol condensation catalyzed by the newly identified aldolase FrzH to yield an aza-tricyclic product with the formation of a C9-C3' bond. The short-chain dehydrogenase/reductase FrzI then produces dephospho-(-)-FR901483 that is phosphorylated at C4'-OH into (-)-FR901483 by the phosphotransferase FrzJ. The polypeptide is Cytochrome P450 monooxygenase FrzL (Cladobotryum sp).